The chain runs to 262 residues: Aminoglycoside (3'') (9) adenylyltransferase (262 aa).

The tract at residues 1–157 (MTLSIPPSIQ…ERAERLFTPA (157 aa)) is adenylyltransferase domain. 3 residues coordinate ATP: S36, S46, and D47. Mg(2+) is bound by residues D47, D49, and E87. Catalysis depends on E87, which acts as the Proton acceptor. D130 lines the ATP pocket. Residues 158–262 (PAAQLLKALR…AKAHIPTQFT (105 aa)) are helical domain. Residues 173-178 (WQSTAD) and H185 each bind streptomycin. The ATP site is built by K205 and Y231.

As to quaternary structure, monomer.

The enzyme catalyses streptomycin + ATP = 3''-O-adenylylstreptomycin + diphosphate. It catalyses the reaction spectinomycin + ATP = 9-O-adenylylspectinomycin + diphosphate. Mediates bacterial resistance to the antibiotics streptomycin and spectinomycin, does not confer resistance to kanamycin. Binds ATP first, then antibiotic. This chain is Aminoglycoside (3'') (9) adenylyltransferase (aadA), found in Salmonella typhimurium (strain LT2 / SGSC1412 / ATCC 700720).